The following is a 545-amino-acid chain: ATP synthase subunit alpha (545 aa).

173-180 (GDRQTGKS) is an ATP binding site.

Belongs to the ATPase alpha/beta chains family. In terms of assembly, F-type ATPases have 2 components, CF(1) - the catalytic core - and CF(0) - the membrane proton channel. CF(1) has five subunits: alpha(3), beta(3), gamma(1), delta(1), epsilon(1). CF(0) has three main subunits: a(1), b(2) and c(9-12). The alpha and beta chains form an alternating ring which encloses part of the gamma chain. CF(1) is attached to CF(0) by a central stalk formed by the gamma and epsilon chains, while a peripheral stalk is formed by the delta and b chains.

The protein resides in the cell membrane. The catalysed reaction is ATP + H2O + 4 H(+)(in) = ADP + phosphate + 5 H(+)(out). Produces ATP from ADP in the presence of a proton gradient across the membrane. The alpha chain is a regulatory subunit. This is ATP synthase subunit alpha from Arthrobacter sp. (strain FB24).